The following is a 692-amino-acid chain: Follicle-stimulating hormone receptor (692 aa).

Residues 1 to 17 (MALLLVSLLAFLGTGSG) form the signal peptide. Disulfide bonds link cysteine 18–cysteine 25 and cysteine 23–cysteine 32. The LRRNT domain occupies 18–46 (CHHWLCHCSNRVFLCQDSKVTEIPTDLPR). Topologically, residues 18–365 (CHHWLCHCSN…EDIMGYNILR (348 aa)) are extracellular. 9 LRR repeats span residues 49-72 (IELR…FGDL), 73-97 (EKIE…LPKL), 98-118 (HEIR…AFQN), 119-143 (LPSL…KIQS), 144-169 (LQKV…MGLS), 170-192 (FESV…AFNG), 193-216 (TQLD…VFQG), 217-240 (ASGP…GLEN), and 241-259 (LKKL…PNLD). 2 N-linked (GlcNAc...) asparagine glycosylation sites follow: asparagine 191 and asparagine 199. 4 disulfides stabilise this stretch: cysteine 275/cysteine 345, cysteine 276/cysteine 292, cysteine 276/cysteine 355, and cysteine 292/cysteine 337. Asparagine 293 is a glycosylation site (N-linked (GlcNAc...) asparagine). The residue at position 334 (tyrosine 334) is a Sulfotyrosine. A helical transmembrane segment spans residues 366 to 386 (VLIWFISILAITGNTTVLVVL). The Cytoplasmic portion of the chain corresponds to 387–397 (TTSQYKLTVPR). Residues 398-420 (FLMCNLAFADLCIGIYLLLIASV) form a helical membrane-spanning segment. Topologically, residues 421–442 (DIHTKSQYHNYAIDWQTGAGCD) are extracellular. Cysteines 441 and 516 form a disulfide. The chain crosses the membrane as a helical span at residues 443–464 (AAGFFTVFASELSVYTLTAITL). Residues 465–484 (ERWHTITHAMQLECKVQLRH) lie on the Cytoplasmic side of the membrane. A helical membrane pass occupies residues 485-507 (AASVMVLGWTFAFAAALFPIFGI). The Extracellular segment spans residues 508–527 (SSYMKVSICLPMDIDSPLSQ). Residues 528–549 (LYVMALLVLNVLAFVVICGCYT) traverse the membrane as a helical segment. Residues 550–572 (HIYLTVRNPTIVSSSSDTKIAKR) are Cytoplasmic-facing. The chain crosses the membrane as a helical span at residues 573–596 (MATLIFTDFLCMAPISFFAISASL). Over 597–607 (KVPLITVSKAK) the chain is Extracellular. The helical transmembrane segment at 608–629 (ILLVLFYPINSCANPFLYAIFT) threads the bilayer. Residues 630–692 (KNFRRDFFIL…LVPLNHSSQN (63 aa)) lie on the Cytoplasmic side of the membrane.

The protein belongs to the G-protein coupled receptor 1 family. FSH/LSH/TSH subfamily. In terms of assembly, homotrimer. Functions as a homotrimer binding the FSH hormone heterodimer composed of CGA and FSHB. Interacts with ARRB2. Interacts with APPL2; interaction is independent of follicle stimulating hormone stimulation. N-glycosylated; indirectly required for FSH-binding, possibly via a conformational change that allows high affinity binding of hormone. In terms of processing, sulfated. In terms of tissue distribution, sertoli cells and ovarian granulosa cells.

The protein localises to the cell membrane. In terms of biological role, g protein-coupled receptor for follitropin, the follicle-stimulating hormone. Through cAMP production activates the downstream PI3K-AKT and ERK1/ERK2 signaling pathways. This chain is Follicle-stimulating hormone receptor (Fshr), found in Rattus norvegicus (Rat).